Here is a 448-residue protein sequence, read N- to C-terminus: Methylenetetrahydrofolate--tRNA-(uracil-5-)-methyltransferase TrmFO (448 aa).

13-18 (GAGLAG) lines the FAD pocket.

It belongs to the MnmG family. TrmFO subfamily. Requires FAD as cofactor.

It localises to the cytoplasm. It carries out the reaction uridine(54) in tRNA + (6R)-5,10-methylene-5,6,7,8-tetrahydrofolate + NADH + H(+) = 5-methyluridine(54) in tRNA + (6S)-5,6,7,8-tetrahydrofolate + NAD(+). The catalysed reaction is uridine(54) in tRNA + (6R)-5,10-methylene-5,6,7,8-tetrahydrofolate + NADPH + H(+) = 5-methyluridine(54) in tRNA + (6S)-5,6,7,8-tetrahydrofolate + NADP(+). Its function is as follows. Catalyzes the folate-dependent formation of 5-methyl-uridine at position 54 (M-5-U54) in all tRNAs. In Streptococcus pyogenes serotype M18 (strain MGAS8232), this protein is Methylenetetrahydrofolate--tRNA-(uracil-5-)-methyltransferase TrmFO.